We begin with the raw amino-acid sequence, 216 residues long: Uracil phosphoribosyltransferase (216 aa).

Residues Arg85, Arg110, and Asp135–Ser143 contribute to the 5-phospho-alpha-D-ribose 1-diphosphate site. Uracil contacts are provided by residues Ile200 and Gly205 to Ala207. Asp206 lines the 5-phospho-alpha-D-ribose 1-diphosphate pocket.

The protein belongs to the UPRTase family. Mg(2+) is required as a cofactor.

The enzyme catalyses UMP + diphosphate = 5-phospho-alpha-D-ribose 1-diphosphate + uracil. Its pathway is pyrimidine metabolism; UMP biosynthesis via salvage pathway; UMP from uracil: step 1/1. With respect to regulation, allosterically activated by GTP. In terms of biological role, catalyzes the conversion of uracil and 5-phospho-alpha-D-ribose 1-diphosphate (PRPP) to UMP and diphosphate. This chain is Uracil phosphoribosyltransferase, found in Burkholderia cenocepacia (strain ATCC BAA-245 / DSM 16553 / LMG 16656 / NCTC 13227 / J2315 / CF5610) (Burkholderia cepacia (strain J2315)).